The sequence spans 757 residues: MSKRKEFDEDAPVDPSDLLEFINLGAGNEVGRSCHVIQYKGKTVMLDAGVHPAYTGLSALPFFDEFDLSTVDVLLISHFHLDHVASLPYVMQKTNFRGRVFMTHPTKAVCKWLLSDYVKVSNVGMEDQLYDEKDLLAAFDRIEAVDYHSTIEVEGIKFTPYHAGHVLGACMYFVEMAGVNILFTGDYSREEDRHLHVAEVPPKRPDVLITESTYGTASHQPRLEKEARLLNIIHSTIRNGGRVLMPVFALGRAQELLLILDEYWNNHLDLRSVPIYYASSLARKCMAIFQTYVNMMNDNIRKIFAERNPFIFRFVKSLRNLEKFDDIGPSVILASPGMLQNGVSRTLLERWAPDPRNTLLLTGYSVEGTMAKQITNEPIEIVSLSGQKIPRRMAVEELSFAAHVDYLQNSEFIDLVNADHIILVHGEQTNMGRLKSALASKFHNRKVDVKVYTPRNCVPLYLPFKGERLVRALGKVAVHKPKEGDIMSGILIQKDANYKLMSAEDLRDFSDLTTTVLTQKQVIPFFSSMELANFHLKQMFGYVKQSKTKAGQPQYTVMDAITLTLIQEHKLALEWVGNIMNDTIADSVITILLGIESSPASVKLTSHKCNHLHSHLDKPPKVSKEEDRIKKLMMFLDNQFGESMTKTEKGVEIKFEKYEASIDFSTMKVECSNEALRSRVVHVLSRAINTILPFSEASQNDVSEDDFENEESDDDKIFEQQTKIEDDVKNENKTEPVEEQKSEEKNEQPNLKKEELS.

Residues His-78, His-80, Asp-82, His-83, His-165, and Asp-186 each contribute to the Zn(2+) site. The Proton donor role is filled by His-403. His-425 is a binding site for Zn(2+). The interval 698-757 is disordered; it reads SQNDVSEDDFENEESDDDKIFEQQTKIEDDVKNENKTEPVEEQKSEEKNEQPNLKKEELS. Residues 702 to 714 show a composition bias toward acidic residues; the sequence is VSEDDFENEESDD. Positions 715–757 are enriched in basic and acidic residues; that stretch reads DKIFEQQTKIEDDVKNENKTEPVEEQKSEEKNEQPNLKKEELS.

It belongs to the metallo-beta-lactamase superfamily. RNA-metabolizing metallo-beta-lactamase-like family. CPSF2/YSH1 subfamily.

Its subcellular location is the cytoplasm. The protein localises to the nucleus. Component of the cleavage factor I (CF I) involved in pre-mRNA 3'-end processing. This is Endoribonuclease ysh1 (ysh1) from Schizosaccharomyces pombe (strain 972 / ATCC 24843) (Fission yeast).